A 204-amino-acid polypeptide reads, in one-letter code: Ricin B-like lectin R40G3 (204 aa).

The 147-residue stretch at 54–200 (TVKVYCRANP…CEGDNQRWKI (147 aa)) folds into the Ricin B-type lectin domain.

In terms of tissue distribution, expressed in shoots and lamina.

Lectin which binds carbohydrates in vitro. Interacts through its lectin domain with glycan structures containing specific motifs. This chain is Ricin B-like lectin R40G3, found in Oryza sativa subsp. japonica (Rice).